A 155-amino-acid chain; its full sequence is Large ribosomal subunit protein uL15 (155 aa).

Residues 1–13 (MKLNELRDAEGAT) show a composition bias toward basic and acidic residues. The segment at 1-41 (MKLNELRDAEGATKARKRVGRGIGSGSGKTGGRGVKGQKSR) is disordered. Gly residues predominate over residues 21 to 35 (RGIGSGSGKTGGRGV).

This sequence belongs to the universal ribosomal protein uL15 family. Part of the 50S ribosomal subunit.

Its function is as follows. Binds to the 23S rRNA. The polypeptide is Large ribosomal subunit protein uL15 (Chelativorans sp. (strain BNC1)).